The primary structure comprises 361 residues: MIPEGTRFLLPPEARLKAEVVGKLQHLFRRHGYEPVELPALELYDPDHPLAERAFKLVDKTGEVLALRSEFTTLLAKLLRAHLGEGAHRFQYAGPLWLREADAELGRLREYTQVGLELLGATGPLADAEVLELAFAALEALGVQGEVEVGLPSLVGEVLKASGLPEALQRRAQQAIHRKNLPELKGLLAESPVPEEARKVLLALPDLYGGREVLKEARGLPLPPKAQEALAQLERTLDLLGRPVLLDLGMARRYEYYSGIFFRAYTPGFGLPLLGGGRYDGALFPKAAGFALGVERLLEALRLPKEEEPPEVLALDLKALRRFARERRTELFHGEDPVAYARRRGIPFLARGEELFRVEEA.

It belongs to the class-II aminoacyl-tRNA synthetase family. HisZ subfamily. In terms of assembly, heteromultimer composed of HisG and HisZ subunits.

It localises to the cytoplasm. Its pathway is amino-acid biosynthesis; L-histidine biosynthesis; L-histidine from 5-phospho-alpha-D-ribose 1-diphosphate: step 1/9. Its function is as follows. Required for the first step of histidine biosynthesis. May allow the feedback regulation of ATP phosphoribosyltransferase activity by histidine. The protein is ATP phosphoribosyltransferase regulatory subunit of Thermus thermophilus (strain ATCC 27634 / DSM 579 / HB8).